Consider the following 502-residue polypeptide: Cytochrome P450 71B20 (502 aa).

Residues 1–21 traverse the membrane as a helical segment; that stretch reads MAISFLCFCLITLASLIFFAK. C444 contacts heme.

Belongs to the cytochrome P450 family. Requires heme as cofactor.

The protein localises to the membrane. This Arabidopsis thaliana (Mouse-ear cress) protein is Cytochrome P450 71B20 (CYP71B20).